A 142-amino-acid polypeptide reads, in one-letter code: Large ribosomal subunit protein uL13 (142 aa).

This sequence belongs to the universal ribosomal protein uL13 family. As to quaternary structure, part of the 50S ribosomal subunit.

This protein is one of the early assembly proteins of the 50S ribosomal subunit, although it is not seen to bind rRNA by itself. It is important during the early stages of 50S assembly. The sequence is that of Large ribosomal subunit protein uL13 from Pseudomonas syringae pv. syringae (strain B728a).